The primary structure comprises 232 residues: GFP-like fluorescent chromoprotein dsFP483 (232 aa).

The segment at residues 66–68 is a cross-link (2-iminomethyl-5-imidazolinone (Gln-Gly)); sequence QYG. Tyrosine 67 bears the 2,3-didehydrotyrosine mark.

It belongs to the GFP family. Contains a chromophore consisting of modified amino acid residues. The chromophore is formed by autocatalytic backbone condensation between Xaa-N and Gly-(N+2), oxidation of Tyr-(N+1) to didehydrotyrosine, and formation of a double bond to the alpha-amino nitrogen of residue Xaa-N. Maturation of the chromophore requires nothing other than molecular oxygen. The precise stereochemistry of the tyrosine has not been determined. As to expression, oral disk.

In terms of biological role, pigment protein that is green in color. This chain is GFP-like fluorescent chromoprotein dsFP483, found in Discosoma striata (Striped mushroom).